We begin with the raw amino-acid sequence, 412 residues long: Serine--tRNA ligase (412 aa).

An L-serine-binding site is contributed by 228-230; sequence TAE. Residue 259 to 261 coordinates ATP; sequence RKE. Position 282 (glutamate 282) interacts with L-serine. 346–349 contributes to the ATP binding site; it reads EISS. Serine 380 is an L-serine binding site.

Belongs to the class-II aminoacyl-tRNA synthetase family. Type-1 seryl-tRNA synthetase subfamily. Homodimer. The tRNA molecule binds across the dimer.

It localises to the cytoplasm. It catalyses the reaction tRNA(Ser) + L-serine + ATP = L-seryl-tRNA(Ser) + AMP + diphosphate + H(+). The enzyme catalyses tRNA(Sec) + L-serine + ATP = L-seryl-tRNA(Sec) + AMP + diphosphate + H(+). Its pathway is aminoacyl-tRNA biosynthesis; selenocysteinyl-tRNA(Sec) biosynthesis; L-seryl-tRNA(Sec) from L-serine and tRNA(Sec): step 1/1. Functionally, catalyzes the attachment of serine to tRNA(Ser). Is also able to aminoacylate tRNA(Sec) with serine, to form the misacylated tRNA L-seryl-tRNA(Sec), which will be further converted into selenocysteinyl-tRNA(Sec). This Aliarcobacter butzleri (strain RM4018) (Arcobacter butzleri) protein is Serine--tRNA ligase.